Reading from the N-terminus, the 274-residue chain is 2,3,4,5-tetrahydropyridine-2,6-dicarboxylate N-succinyltransferase (274 aa).

Residues R104 and D141 each contribute to the substrate site.

This sequence belongs to the transferase hexapeptide repeat family. Homotrimer.

The protein localises to the cytoplasm. The enzyme catalyses (S)-2,3,4,5-tetrahydrodipicolinate + succinyl-CoA + H2O = (S)-2-succinylamino-6-oxoheptanedioate + CoA. Its pathway is amino-acid biosynthesis; L-lysine biosynthesis via DAP pathway; LL-2,6-diaminopimelate from (S)-tetrahydrodipicolinate (succinylase route): step 1/3. The sequence is that of 2,3,4,5-tetrahydropyridine-2,6-dicarboxylate N-succinyltransferase from Shewanella amazonensis (strain ATCC BAA-1098 / SB2B).